We begin with the raw amino-acid sequence, 1008 residues long: Phytosulfokine receptor 1 (1008 aa).

Residues 1–25 (MRVHRFCVIVIFLTELLCFFYSSES) form the signal peptide. N-linked (GlcNAc...) asparagine glycans are attached at residues Asn-55, Asn-64, and Asn-73. LRR repeat units lie at residues 75–98 (TGRV…SLGK), 99–123 (LDEI…IFNL), 124–148 (KNLQ…NLPA), 150–170 (QSFD…ICHN), 172–194 (TQIR…GFGK), 195–219 (CVLL…LFHL), 221–243 (RLNL…IRNL), 244–266 (SSLV…VFDE), 291–315 (SPSL…CTAM), 316–339 (IALN…LPDC), 341–362 (RLKN…SFKN), and 363–387 (FESL…GILQ). N-linked (GlcNAc...) asparagine glycosylation is present at Asn-106. N-linked (GlcNAc...) asparagine glycans are attached at residues Asn-160, Asn-170, and Asn-187. Asn-242 is a glycosylation site (N-linked (GlcNAc...) asparagine). Residue Arg-300 participates in phytosulfokine binding. Residues Asn-301 and Asn-311 are each glycosylated (N-linked (GlcNAc...) asparagine). Phytosulfokine contacts are provided by Asn-346, Ser-370, and Ser-372. Asn-373, Asn-378, and Asn-391 each carry an N-linked (GlcNAc...) asparagine glycan. 4 LRR repeats span residues 392–414 (LTTL…SLHF), 415–438 (EKLK…LSSS), 439–464 (NELQ…DFKA), and 466–486 (FYLD…LTKL). Residues Thr-398, Asn-424, and Asp-445 each coordinate phytosulfokine. Residues Asn-472 and Asn-493 are each glycosylated (N-linked (GlcNAc...) asparagine). Position 508 (Lys-508) interacts with phytosulfokine. Asn-510 and Asn-534 each carry an N-linked (GlcNAc...) asparagine glycan. 4 LRR repeats span residues 521–545 (IFGF…EFGN), 546–570 (LKKL…LSGM), 571–594 (TSLE…LQQL), and 596–619 (FLSK…QFQT). N-linked (GlcNAc...) asparagine glycosylation is found at Asn-606 and Asn-622. A helical membrane pass occupies residues 660-680 (MAIGIAFGSVFLLTLLSLIVL). Phosphothreonine is present on Thr-731. Residues 734 to 1005 (FDQANIIGCG…PTTQQLVSWL (272 aa)) enclose the Protein kinase domain. Residues 740–748 (IGCGGFGMV) and Lys-762 each bind ATP. A phosphotyrosine mark is found at Tyr-807 and Tyr-847. Asp-860 serves as the catalytic Proton acceptor. Tyr-902 is modified (phosphotyrosine).

The protein belongs to the protein kinase superfamily. Ser/Thr protein kinase family. Homo- and heterodimers with PSY1R. Heterodimers with the somatic embryogenesis receptor-like kinases (SERKs). PSK is not directly involved in PSKR-SERK interaction but stabilizes PSKR island domain for recruitment of a SERK. Part of a functional complex containing PSKR1, BAK1, CNGC17, and AHA. Interacts with AHA1, AHA2, and BAK1, but not with CNGC17 or BRI1. It depends on Mg(2+) as a cofactor. The cofactor is Mn(2+). As to expression, weakly expressed in roots, leaves, stems and flowers. Expressed in the primary and lateral roots, including root primordia and root tips, but not in the hypocotyl.

The protein resides in the cell membrane. The enzyme catalyses L-seryl-[protein] + ATP = O-phospho-L-seryl-[protein] + ADP + H(+). The catalysed reaction is L-threonyl-[protein] + ATP = O-phospho-L-threonyl-[protein] + ADP + H(+). It carries out the reaction GTP = 3',5'-cyclic GMP + diphosphate. CGMP suppresses kinase activity. Functionally, phytosulfokine receptor with both a serine/threonine-protein kinase activity and a guanylate cyclase activity. Regulates, in response to phytosulfokine binding, a signaling cascade involved in plant cell differentiation, organogenesis, somatic embryogenesis, cellular proliferation and plant growth. Involved in plant immunity, with antagonistic effects on bacterial and fungal resistances. Not involved in PSY perception. CNGC17 and AHAs form a functional cation-translocating unit that is activated by PSKR1/BAK1 and possibly other BAK1/RLK complexes. In Arabidopsis thaliana (Mouse-ear cress), this protein is Phytosulfokine receptor 1.